The primary structure comprises 228 residues: Max-interacting protein 1 (228 aa).

Disordered stretches follow at residues G29 to E76 and I161 to S228. Positions Q43–K56 are enriched in basic residues. A compositionally biased stretch (polar residues) spans H57 to S70. The bHLH domain occupies A67 to L119. The segment covering E173–S183 has biased composition (acidic residues). Polar residues predominate over residues G216–S228.

Interacts with SMC3. Efficient DNA binding requires dimerization with another bHLH protein. Binds DNA as a heterodimer with MAX. Interacts with RNF17. In terms of tissue distribution, high levels found in the brain, heart and lung while lower levels are seen in the liver, kidney and skeletal muscle.

Its subcellular location is the nucleus. Its function is as follows. Transcriptional repressor. MXI1 binds with MAX to form a sequence-specific DNA-binding protein complex which recognizes the core sequence 5'-CAC[GA]TG-3'. MXI1 thus antagonizes MYC transcriptional activity by competing for MAX. The protein is Max-interacting protein 1 (MXI1) of Homo sapiens (Human).